Consider the following 1123-residue polypeptide: Adenylyl cyclase X E (1123 aa).

The Cytoplasmic segment spans residues 1–47; the sequence is MPRSLGNCQLNYSKERMWEPGYLKAKCAELRLESEFRLYRIRLWKSY. Residues 48–68 form a helical membrane-spanning segment; that stretch reads LLTFFMLHIFVTSVHCALLLA. Topologically, residues 69 to 73 are extracellular; that stretch reads TIERR. The chain crosses the membrane as a helical span at residues 74–94; it reads SIIYFDVALSIGCALVLILVL. The Cytoplasmic segment spans residues 95 to 106; that stretch reads SVNFCDEFIAKH. The chain crosses the membrane as a helical span at residues 107 to 127; that stretch reads TWYMYASSIFASLTLVFADLT. The Extracellular segment spans residues 128–137; that stretch reads ESIYHTYAHS. The helical transmembrane segment at 138–158 threads the bilayer; that stretch reads WILGTFYDTYIIYMIYMFLPI. The Cytoplasmic segment spans residues 159-163; sequence HFISG. Residues 164-184 traverse the membrane as a helical segment; sequence AVLLALLVSGLYILYFVIFIA. At 185–196 the chain is on the extracellular side; sequence QGFAQFASALFS. Residues 197-217 traverse the membrane as a helical segment; sequence VGGMSVDIVHYLCLNLVGIFY. At 218-581 the chain is on the cytoplasmic side; the sequence is RVMNDTVVRS…YLKQTDYMYK (364 aa). Residues 346–348 and Arg-392 each bind ATP; that span reads LGD. Asp-348 contacts Mg(2+). Residues 582-602 form a helical membrane-spanning segment; that stretch reads YSIILSASVGCSLVYIELMDT. Residues 603–608 are Extracellular-facing; that stretch reads QMICSS. Residues 609–629 traverse the membrane as a helical segment; the sequence is CFVLPASVATIQCILALIAWY. The Cytoplasmic portion of the chain corresponds to 630-667; that stretch reads KKYCWTRYGRNNVPHHYNGFSCFIFRIHDKILNSLPIR. Residues 668–688 form a helical membrane-spanning segment; it reads ICIYLFLMISSFFVMCLIVMS. At 689–719 the chain is on the extracellular side; that stretch reads CQREEFEMAYIEERLFHYEQEAHICFHPWVT. The chain crosses the membrane as a helical span at residues 720–740; the sequence is TNMLSLMICLTFTFAHIPIMV. The Cytoplasmic segment spans residues 741–743; it reads KTA. Residues 744-764 traverse the membrane as a helical segment; sequence VAILETLAYLLLIFFQFDFVF. Residues 765–772 lie on the Extracellular side of the membrane; it reads HHSVTTNP. Residues 773–793 traverse the membrane as a helical segment; that stretch reads YFKSEYAHALLICITFLIMFV. Over 794–1123 the chain is Cytoplasmic; it reads KERQIEFTNK…STSRHTLQSL (330 aa). ATP contacts are provided by residues Lys-903, 1014–1016, 1021–1025, and Lys-1061; these read DIW and NMASR.

This sequence belongs to the adenylyl cyclase class-4/guanylyl cyclase family. As to expression, expressed in labella.

It is found in the membrane. It catalyses the reaction ATP = 3',5'-cyclic AMP + diphosphate. Its function is as follows. Catalyzes the formation of the signaling molecule cAMP in response to G-protein signaling. This Drosophila melanogaster (Fruit fly) protein is Adenylyl cyclase X E.